Consider the following 456-residue polypeptide: Enolase (456 aa).

Residue Gln164 participates in (2R)-2-phosphoglycerate binding. Glu207 (proton donor) is an active-site residue. Residues Asp244, Glu287, and Asp314 each coordinate Mg(2+). (2R)-2-phosphoglycerate contacts are provided by Lys339, Arg368, Ser369, and Lys390. Lys339 serves as the catalytic Proton acceptor.

It belongs to the enolase family. In terms of assembly, component of the RNA degradosome, a multiprotein complex involved in RNA processing and mRNA degradation. Mg(2+) is required as a cofactor.

The protein localises to the cytoplasm. Its subcellular location is the secreted. The protein resides in the cell surface. It carries out the reaction (2R)-2-phosphoglycerate = phosphoenolpyruvate + H2O. It functions in the pathway carbohydrate degradation; glycolysis; pyruvate from D-glyceraldehyde 3-phosphate: step 4/5. Functionally, catalyzes the reversible conversion of 2-phosphoglycerate (2-PG) into phosphoenolpyruvate (PEP). It is essential for the degradation of carbohydrates via glycolysis. In Francisella tularensis subsp. holarctica (strain LVS), this protein is Enolase.